Reading from the N-terminus, the 261-residue chain is Cytochrome c oxidase subunit 3 (261 aa).

The Mitochondrial matrix segment spans residues 2 to 15; that stretch reads THQTHAYHMVNPSP. The chain crosses the membrane as a helical span at residues 16-34; the sequence is WPLTGALSALLLTSGLVMW. The Mitochondrial intermembrane portion of the chain corresponds to 35–40; it reads FHYNST. Residues 41 to 66 form a helical membrane-spanning segment; sequence ILLSLGLLTNILTMYQWWRDIIREGT. The Mitochondrial matrix portion of the chain corresponds to 67 to 72; the sequence is YQGHHT. A helical transmembrane segment spans residues 73–105; the sequence is PIVQKGLRYGMILFIVSEVFFFAGFFWAFYHSS. The Mitochondrial intermembrane portion of the chain corresponds to 106-128; the sequence is LVPTHDLGGCWPPTGITPLNPLE. A helical transmembrane segment spans residues 129-152; the sequence is VPLLNTSVLLASGVSITWAHHSLM. The Mitochondrial matrix portion of the chain corresponds to 153-155; the sequence is EGN. Residues 156-183 traverse the membrane as a helical segment; sequence RNHMNQALLITILLGLYFTILQASEYFE. The Mitochondrial intermembrane portion of the chain corresponds to 184–190; that stretch reads TSFSISD. Residues 191–223 form a helical membrane-spanning segment; that stretch reads GIYGSTFFMATGFHGLHVIIGSTFLIVCLLRQL. Residues 224-232 are Mitochondrial matrix-facing; sequence KFHFTSKHH. Residues 233–256 traverse the membrane as a helical segment; sequence FGFEAAAWYWHFVDVVWLFLYVSI. Topologically, residues 257–261 are mitochondrial intermembrane; sequence YWWGS.

It belongs to the cytochrome c oxidase subunit 3 family. Component of the cytochrome c oxidase (complex IV, CIV), a multisubunit enzyme composed of 14 subunits. The complex is composed of a catalytic core of 3 subunits MT-CO1, MT-CO2 and MT-CO3, encoded in the mitochondrial DNA, and 11 supernumerary subunits COX4I, COX5A, COX5B, COX6A, COX6B, COX6C, COX7A, COX7B, COX7C, COX8 and NDUFA4, which are encoded in the nuclear genome. The complex exists as a monomer or a dimer and forms supercomplexes (SCs) in the inner mitochondrial membrane with NADH-ubiquinone oxidoreductase (complex I, CI) and ubiquinol-cytochrome c oxidoreductase (cytochrome b-c1 complex, complex III, CIII), resulting in different assemblies (supercomplex SCI(1)III(2)IV(1) and megacomplex MCI(2)III(2)IV(2)).

It localises to the mitochondrion inner membrane. The enzyme catalyses 4 Fe(II)-[cytochrome c] + O2 + 8 H(+)(in) = 4 Fe(III)-[cytochrome c] + 2 H2O + 4 H(+)(out). In terms of biological role, component of the cytochrome c oxidase, the last enzyme in the mitochondrial electron transport chain which drives oxidative phosphorylation. The respiratory chain contains 3 multisubunit complexes succinate dehydrogenase (complex II, CII), ubiquinol-cytochrome c oxidoreductase (cytochrome b-c1 complex, complex III, CIII) and cytochrome c oxidase (complex IV, CIV), that cooperate to transfer electrons derived from NADH and succinate to molecular oxygen, creating an electrochemical gradient over the inner membrane that drives transmembrane transport and the ATP synthase. Cytochrome c oxidase is the component of the respiratory chain that catalyzes the reduction of oxygen to water. Electrons originating from reduced cytochrome c in the intermembrane space (IMS) are transferred via the dinuclear copper A center (CU(A)) of subunit 2 and heme A of subunit 1 to the active site in subunit 1, a binuclear center (BNC) formed by heme A3 and copper B (CU(B)). The BNC reduces molecular oxygen to 2 water molecules using 4 electrons from cytochrome c in the IMS and 4 protons from the mitochondrial matrix. This is Cytochrome c oxidase subunit 3 from Rattus norvegicus (Rat).